A 145-amino-acid polypeptide reads, in one-letter code: Transcription antitermination protein NusB (145 aa).

Belongs to the NusB family.

Its function is as follows. Involved in transcription antitermination. Required for transcription of ribosomal RNA (rRNA) genes. Binds specifically to the boxA antiterminator sequence of the ribosomal RNA (rrn) operons. The sequence is that of Transcription antitermination protein NusB from Citrifermentans bemidjiense (strain ATCC BAA-1014 / DSM 16622 / JCM 12645 / Bem) (Geobacter bemidjiensis).